Consider the following 382-residue polypeptide: 1-deoxy-D-xylulose 5-phosphate reductoisomerase (382 aa).

The NADPH site is built by Thr11, Gly12, Ser13, Ile14, and Asn123. Position 124 (Lys124) interacts with 1-deoxy-D-xylulose 5-phosphate. Residue Glu125 coordinates NADPH. Asp149 provides a ligand contact to Mn(2+). Residues Ser150, Glu151, Ser173, and His196 each coordinate 1-deoxy-D-xylulose 5-phosphate. Mn(2+) is bound at residue Glu151. Gly202 is an NADPH binding site. Positions 209, 214, 215, and 218 each coordinate 1-deoxy-D-xylulose 5-phosphate. Residue Glu218 participates in Mn(2+) binding.

The protein belongs to the DXR family. The cofactor is Mg(2+). It depends on Mn(2+) as a cofactor.

The catalysed reaction is 2-C-methyl-D-erythritol 4-phosphate + NADP(+) = 1-deoxy-D-xylulose 5-phosphate + NADPH + H(+). The protein operates within isoprenoid biosynthesis; isopentenyl diphosphate biosynthesis via DXP pathway; isopentenyl diphosphate from 1-deoxy-D-xylulose 5-phosphate: step 1/6. Catalyzes the NADPH-dependent rearrangement and reduction of 1-deoxy-D-xylulose-5-phosphate (DXP) to 2-C-methyl-D-erythritol 4-phosphate (MEP). This Phocaeicola vulgatus (strain ATCC 8482 / DSM 1447 / JCM 5826 / CCUG 4940 / NBRC 14291 / NCTC 11154) (Bacteroides vulgatus) protein is 1-deoxy-D-xylulose 5-phosphate reductoisomerase.